Consider the following 577-residue polypeptide: Aspartate--tRNA ligase (577 aa).

Position 169 (glutamate 169) interacts with L-aspartate. The aspartate stretch occupies residues 193-196 (QLYK). Residue arginine 215 participates in L-aspartate binding. Residues 215–217 (RDE) and glutamine 224 contribute to the ATP site. Histidine 440 lines the L-aspartate pocket. Position 474 (glutamate 474) interacts with ATP. Arginine 481 provides a ligand contact to L-aspartate. Position 526-529 (526-529 (GIDR)) interacts with ATP.

It belongs to the class-II aminoacyl-tRNA synthetase family. Type 1 subfamily. Homodimer.

The protein resides in the cytoplasm. The enzyme catalyses tRNA(Asp) + L-aspartate + ATP = L-aspartyl-tRNA(Asp) + AMP + diphosphate. Its function is as follows. Catalyzes the attachment of L-aspartate to tRNA(Asp) in a two-step reaction: L-aspartate is first activated by ATP to form Asp-AMP and then transferred to the acceptor end of tRNA(Asp). In Mesoplasma florum (strain ATCC 33453 / NBRC 100688 / NCTC 11704 / L1) (Acholeplasma florum), this protein is Aspartate--tRNA ligase.